Here is an 83-residue protein sequence, read N- to C-terminus: Small ribosomal subunit protein eS27 (83 aa).

The segment at 37–59 (CSGCFKISTVFSHATTVVVCVGC) adopts a C4-type zinc-finger fold.

The protein belongs to the eukaryotic ribosomal protein eS27 family. Requires Zn(2+) as cofactor.

This Caenorhabditis elegans protein is Small ribosomal subunit protein eS27 (rps-27).